An 88-amino-acid polypeptide reads, in one-letter code: UPF0298 protein BC_3932 (88 aa).

Belongs to the UPF0298 family.

Its subcellular location is the cytoplasm. The sequence is that of UPF0298 protein BC_3932 from Bacillus cereus (strain ATCC 14579 / DSM 31 / CCUG 7414 / JCM 2152 / NBRC 15305 / NCIMB 9373 / NCTC 2599 / NRRL B-3711).